The sequence spans 354 residues: Guanine nucleotide-binding protein G(i) subunit alpha-1 (354 aa).

A lipid anchor (N-myristoyl glycine) is attached at Gly-2. A lipid anchor (S-palmitoyl cysteine) is attached at Cys-3. Residues 32 to 354 (REVKLLLLGA…KNNLKDCGLF (323 aa)) form the G-alpha domain. Residues 35 to 48 (KLLLLGAGESGKST) are G1 motif. Residues 43 to 48 (ESGKST), 150 to 151 (DS), and 175 to 178 (LRTR) contribute to the GTP site. Mg(2+) is bound at residue Ser-47. The segment at 173-181 (DVLRTRVKT) is G2 motif. Position 181 (Thr-181) interacts with Mg(2+). Positions 196-205 (FKMFDVGGQR) are G3 motif. Residues 200 to 204 (DVGGQ), 269 to 272 (NKKD), and Ala-326 each bind GTP. The interval 265 to 272 (ILFLNKKD) is G4 motif. The tract at residues 324 to 329 (TCATDT) is G5 motif.

It belongs to the G-alpha family. G(i/o/t/z) subfamily. In terms of assembly, heterotrimeric G proteins are composed of 3 units; alpha, beta and gamma. The alpha chain contains the guanine nucleotide binding site. Part of a spindle orientation complex at least composed of GNAI1, GPSM2 and NUMA1. Identified in complex with the beta subunit GNB1 and the gamma subunit GNG1. Identified in complex with the beta subunit GNB1 and the gamma subunit GNG2. Component of the TAS2R14-GNAI1 complex, consisting of TAS2R14, GNAI1, GNB1 and GNG2; within the complex interacts with TAS2R14; this complex plays a role in the perception of bitterness. GTP binding causes dissociation of the heterotrimer, liberating the individual subunits so that they can interact with downstream effector proteins. Interacts (GDP-bound form) with GPSM1; this inhibits guanine nucleotide exchange and GTP binding. Interacts (GDP-bound form) with GPSM2 (via GoLoco domains); this inhibits guanine nucleotide exchange. Interacts with RGS10; this strongly enhances GTP hydrolysis. Interacts with RGS1 and RGS16. Interacts with RGS4. Interacts with RGS12. Interacts (via active GTP- or inactive GDP-bound forms) with RGS14 (via RGS and GoLoco domains). Interacts with RGS3, RGS6, RGS7, RGS8, RGS17, RGS18 and RGS20 (in vitro). Interacts (GDP-bound form) with RIC8A (via C-terminus); promoting GNAI1 folding and association with the plasma membrane. Interacts (inactive GDP-bound form) with NUCB1 (via GBA motif); the interaction leads to activation of GNAI1. Interacts (inactive GDP-bound form) with CCDC88C/DAPLE (via GBA motif); the interaction leads to activation of GNAI1. Interacts (inactive GDP-bound form) with CCDC8A/GIV (via GBA motif). Interacts with GPR15. Post-translationally, myristoylation at Gly-2 is required for membrane anchoring before palmitoylation. Palmitoylation at Cys-3 varies with membrane lipid composition.

It is found in the nucleus. It localises to the cytoplasm. The protein resides in the cell membrane. The protein localises to the cytoskeleton. Its subcellular location is the microtubule organizing center. It is found in the centrosome. It localises to the cell cortex. The protein resides in the membrane. The enzyme catalyses GTP + H2O = GDP + phosphate + H(+). In terms of biological role, guanine nucleotide-binding proteins (G proteins) function as transducers downstream of G protein-coupled receptors (GPCRs) in numerous signaling cascades. The alpha chain contains the guanine nucleotide binding site and alternates between an active, GTP-bound state and an inactive, GDP-bound state. Signaling by an activated GPCR promotes GDP release and GTP binding. The alpha subunit has a low GTPase activity that converts bound GTP to GDP, thereby terminating the signal. Both GDP release and GTP hydrolysis are modulated by numerous regulatory proteins. Signaling is mediated via effector proteins, such as adenylate cyclase. Inhibits adenylate cyclase activity of ADCY1, ADCY5 and ADCY6, leading to decreased intracellular cAMP levels. The inactive GDP-bound form prevents the association of RGS14 with centrosomes and is required for the translocation of RGS14 from the cytoplasm to the plasma membrane. Required for normal cytokinesis during mitosis. Required for cortical dynein-dynactin complex recruitment during metaphase. The sequence is that of Guanine nucleotide-binding protein G(i) subunit alpha-1 (Gnai1) from Rattus norvegicus (Rat).